A 121-amino-acid chain; its full sequence is Large ribosomal subunit protein uL18c (121 aa).

The protein belongs to the universal ribosomal protein uL18 family. In terms of assembly, part of the 50S ribosomal subunit; contacts the 5S rRNA.

Its subcellular location is the plastid. It is found in the cyanelle. Binds 5S rRNA, forms part of the central protuberance of the 50S subunit. This chain is Large ribosomal subunit protein uL18c (rpl18), found in Cyanophora paradoxa.